Reading from the N-terminus, the 545-residue chain is Bifunctional purine biosynthesis protein PurH (545 aa).

The 150-residue stretch at 1 to 150 folds into the MGS-like domain; the sequence is MTNTNRPIRR…KNHATVAIVT (150 aa).

It belongs to the PurH family.

It carries out the reaction (6R)-10-formyltetrahydrofolate + 5-amino-1-(5-phospho-beta-D-ribosyl)imidazole-4-carboxamide = 5-formamido-1-(5-phospho-D-ribosyl)imidazole-4-carboxamide + (6S)-5,6,7,8-tetrahydrofolate. It catalyses the reaction IMP + H2O = 5-formamido-1-(5-phospho-D-ribosyl)imidazole-4-carboxamide. It participates in purine metabolism; IMP biosynthesis via de novo pathway; 5-formamido-1-(5-phospho-D-ribosyl)imidazole-4-carboxamide from 5-amino-1-(5-phospho-D-ribosyl)imidazole-4-carboxamide (10-formyl THF route): step 1/1. Its pathway is purine metabolism; IMP biosynthesis via de novo pathway; IMP from 5-formamido-1-(5-phospho-D-ribosyl)imidazole-4-carboxamide: step 1/1. The sequence is that of Bifunctional purine biosynthesis protein PurH from Bifidobacterium longum (strain NCC 2705).